Consider the following 598-residue polypeptide: Elongation factor 4 (598 aa).

The tr-type G domain occupies 4–181 (SKIRNFSIIA…AVIEKIPAPK (178 aa)). GTP is bound by residues 16-21 (DHGKST) and 128-131 (NKID).

Belongs to the TRAFAC class translation factor GTPase superfamily. Classic translation factor GTPase family. LepA subfamily.

It is found in the cell membrane. The catalysed reaction is GTP + H2O = GDP + phosphate + H(+). Its function is as follows. Required for accurate and efficient protein synthesis under certain stress conditions. May act as a fidelity factor of the translation reaction, by catalyzing a one-codon backward translocation of tRNAs on improperly translocated ribosomes. Back-translocation proceeds from a post-translocation (POST) complex to a pre-translocation (PRE) complex, thus giving elongation factor G a second chance to translocate the tRNAs correctly. Binds to ribosomes in a GTP-dependent manner. This is Elongation factor 4 from Mycoplasma mobile (strain ATCC 43663 / 163K / NCTC 11711) (Mesomycoplasma mobile).